Here is a 224-residue protein sequence, read N- to C-terminus: uncharacterized protein (224 aa).

Residues 203 to 224 (ELKKKKKKKIKKPKEIRNQKNV) form a disordered region. The segment covering 204–214 (LKKKKKKKIKK) has biased composition (basic residues). Residues 215 to 224 (PKEIRNQKNV) show a composition bias toward basic and acidic residues.

This is an uncharacterized protein from Mycoplasma genitalium (strain ATCC 33530 / DSM 19775 / NCTC 10195 / G37) (Mycoplasmoides genitalium).